The primary structure comprises 291 residues: Lys-63-specific deubiquitinase BRCC36 (291 aa).

Ala2 carries the post-translational modification N-acetylalanine. Residues 12 to 179 (VHLESDAFLV…YTCFQSVQAQ (168 aa)) enclose the MPN domain. His122, His124, and Asp135 together coordinate Zn(2+). The short motif at 122–135 (HSHPHITVWPSHVD) is the JAMM motif element. At Ser233 the chain carries Phosphoserine.

The protein belongs to the peptidase M67A family. BRCC36 subfamily. Component of the ARISC complex, at least composed of UIMC1/RAP80, ABRAXAS1, BRCC3/BRCC36, BABAM2 and BABAM1/NBA1. Component of the BRCA1-A complex, at least composed of BRCA1, BARD1, UIMC1/RAP80, ABRAXAS1, BRCC3/BRCC36, BABAM2 and BABAM1/NBA1. In the BRCA1-A complex, interacts directly with ABRAXAS1 and BABAM2. Component of the BRISC complex, at least composed of ABRAXAS2, BRCC3/BRCC36, BABAM2 and BABAM1/NBA1. Identified in a complex with SHMT2 and the other subunits of the BRISC complex. In the BRISC complex, interacts directly with ABRAXAS2. Identified in a complex with ABRAXAS2 and NUMA1. The BRISC complex interacts with the CSN complex. Component of the BRCA1/BRCA2 containing complex (BRCC), which also contains BRCA1, BRCA2, BARD1, BABAM2 and RAD51. BRCC is a ubiquitin E3 ligase complex that enhances cellular survival following DNA damage. Interacts with BRCA1. Binds polyubiquitin. Interacts with PWWP2B. Interacts with HDAC1; this interaction is enhanced in the presence of PWWP2B. Zn(2+) serves as cofactor.

The protein localises to the nucleus. It is found in the cytoplasm. Its subcellular location is the cytoskeleton. The protein resides in the spindle pole. Metalloprotease that specifically cleaves 'Lys-63'-linked polyubiquitin chains. Does not have activity toward 'Lys-48'-linked polyubiquitin chains. Component of the BRCA1-A complex, a complex that specifically recognizes 'Lys-63'-linked ubiquitinated histones H2A and H2AX at DNA lesions sites, leading to target the BRCA1-BARD1 heterodimer to sites of DNA damage at double-strand breaks (DSBs). In the BRCA1-A complex, it specifically removes 'Lys-63'-linked ubiquitin on histones H2A and H2AX, antagonizing the RNF8-dependent ubiquitination at double-strand breaks (DSBs). Catalytic subunit of the BRISC complex, a multiprotein complex that specifically cleaves 'Lys-63'-linked ubiquitin in various substrates. Mediates the specific 'Lys-63'-specific deubiquitination associated with the COP9 signalosome complex (CSN), via the interaction of the BRISC complex with the CSN complex. The BRISC complex is required for normal mitotic spindle assembly and microtubule attachment to kinetochores via its role in deubiquitinating NUMA1. Plays a role in interferon signaling via its role in the deubiquitination of the interferon receptor IFNAR1; deubiquitination increases IFNAR1 activity by enhancing its stability and cell surface expression. Acts as a regulator of the NLRP3 inflammasome by mediating deubiquitination of NLRP3, leading to NLRP3 inflammasome assembly. Down-regulates the response to bacterial lipopolysaccharide (LPS) via its role in IFNAR1 deubiquitination. Deubiquitinates HDAC1 and PWWP2B leading to their stabilization. The polypeptide is Lys-63-specific deubiquitinase BRCC36 (Brcc3) (Rattus norvegicus (Rat)).